A 65-amino-acid chain; its full sequence is Large ribosomal subunit protein uL29 (65 aa).

It belongs to the universal ribosomal protein uL29 family.

The polypeptide is Large ribosomal subunit protein uL29 (Mycoplasmopsis synoviae (strain 53) (Mycoplasma synoviae)).